The chain runs to 1012 residues: Probable inorganic carbon transporter subunit DabA (1012 aa).

Residues cysteine 489, aspartate 491, histidine 679, and cysteine 694 each coordinate Zn(2+).

It belongs to the inorganic carbon transporter (TC 9.A.2) DabA family. Forms a complex with DabB. Zn(2+) is required as a cofactor.

The protein localises to the cell inner membrane. Functionally, part of an energy-coupled inorganic carbon pump. The chain is Probable inorganic carbon transporter subunit DabA from Dechloromonas aromatica (strain RCB).